We begin with the raw amino-acid sequence, 628 residues long: NUAK family SNF1-like kinase 2 (628 aa).

Met1 bears the N-acetylmethionine mark. One can recognise a Protein kinase domain in the interval 53–303; sequence YEFLETLGKG…LEDVASHWWV (251 aa). ATP contacts are provided by residues 59 to 67 and Lys81; that span reads LGKGTYGKV. The Proton acceptor role is filled by Asp175. Phosphothreonine is present on Thr208. Disordered regions lie at residues 355 to 492 and 522 to 570; these read KQHA…PQAS and GSLD…PLRG. Over residues 428–444 the composition is skewed to pro residues; that stretch reads ELSPIPVSPGQAAPPLP. The residue at position 435 (Ser435) is a Phosphoserine. Positions 457–469 are enriched in low complexity; the sequence is SGYYSSPEPSESG. Residues Ser523, Ser544, Ser547, and Ser573 each carry the phosphoserine modification.

It belongs to the protein kinase superfamily. CAMK Ser/Thr protein kinase family. SNF1 subfamily. Requires Mg(2+) as cofactor. Phosphorylated at Thr-208 by STK11/LKB1 in complex with STE20-related adapter-alpha (STRADA) pseudo kinase and CAB39. Autophosphorylation is also possible at Thr-208.

The enzyme catalyses L-seryl-[protein] + ATP = O-phospho-L-seryl-[protein] + ADP + H(+). It catalyses the reaction L-threonyl-[protein] + ATP = O-phospho-L-threonyl-[protein] + ADP + H(+). With respect to regulation, activated by phosphorylation on Thr-208. Stress-activated kinase involved in tolerance to glucose starvation. Induces cell-cell detachment by increasing F-actin conversion to G-actin. Expression is induced by CD95 or TNF-alpha, via NF-kappa-B. Protects cells from CD95-mediated apoptosis and is required for the increased motility and invasiveness of CD95-activated tumor cells. Phosphorylates LATS1 and LATS2. Plays a key role in neural tube closure during embryonic development through LATS2 phosphorylation and regulation of the nuclear localization of YAP1 a critical downstream regulatory target in the Hippo signaling pathway. This Pongo abelii (Sumatran orangutan) protein is NUAK family SNF1-like kinase 2.